The primary structure comprises 31 residues: Photosystem II reaction center protein M (31 aa).

Residues 5–25 form a helical membrane-spanning segment; that stretch reads ILAFIATALLILVPTAFLLII.

The protein belongs to the PsbM family. As to quaternary structure, PSII is composed of 1 copy each of membrane proteins PsbA, PsbB, PsbC, PsbD, PsbE, PsbF, PsbH, PsbI, PsbJ, PsbK, PsbL, PsbM, PsbT, PsbX, PsbY, PsbZ, Psb30/Ycf12, at least 3 peripheral proteins of the oxygen-evolving complex and a large number of cofactors. It forms dimeric complexes.

The protein localises to the plastid membrane. Functionally, one of the components of the core complex of photosystem II (PSII). PSII is a light-driven water:plastoquinone oxidoreductase that uses light energy to abstract electrons from H(2)O, generating O(2) and a proton gradient subsequently used for ATP formation. It consists of a core antenna complex that captures photons, and an electron transfer chain that converts photonic excitation into a charge separation. This subunit is found at the monomer-monomer interface. This chain is Photosystem II reaction center protein M, found in Cuscuta exaltata (Tall dodder).